A 62-amino-acid chain; its full sequence is ATP synthase subunit J, mitochondrial (62 aa).

The helical transmembrane segment at 13 to 32 threads the bilayer; the sequence is IVKPLWPYAVGGVITFFLFA.

F-type ATP synthases have 2 components, the catalytic core F(1) and the membrane-embedded component F(0), linked together by a central stalk and a peripheral stalk. The central stalk, also called rotor shaft, is often seen as part of F(1). The peripheral stalk is seen as part of F(0). F(0) contains the membrane channel next to the rotor. F-type ATP synthases form dimers but each monomer functions independently in ATP generation. The dimer consists of 17 different polypeptides: ATP1 (subunit alpha, 3 molecules per monomer, part of F(1)), ATP2 (subunit beta, 3 copies per monomer, part of F(1)), ATP3 (subunit gamma, part of the central stalk), ATP4 (subunit b, part of the peripheral stalk), ATP5/OSCP (subunit 5/OSCP, part of the peripheral stalk), ATP6 (subunit a, part of the peripheral stalk), ATP7 (subunit d, part of the peripheral stalk), ATP8 (subunit 8, part of the peripheral stalk), OLI1 (subunit c, part of the rotor, 10 molecules per monomer), ATP14 (subunit h, part of the peripheral stalk), ATP15 (subunit epsilon, part of the central stalk), ATP16 (subunit delta, part of the central stalk), ATP17 (subunit f, part of the peripheral stalk), ATP18 (subunit i/j, part of the peripheral stalk), ATP19 (subunit k, dimer-specific, at interface between monomers), ATP20 (subunit g, at interface between monomers), TIM11 (subunit e, at interface between monomers).

Its subcellular location is the mitochondrion inner membrane. In terms of biological role, mitochondrial membrane ATP synthase (F(1)F(0) ATP synthase or Complex V) produces ATP from ADP in the presence of a proton gradient across the membrane which is generated by electron transport complexes of the respiratory chain. F-type ATP synthases consist of two structural domains, F(1) - containing the extramembraneous catalytic core, and F(0) - containing the membrane proton channel, linked together by a central stalk and a peripheral stalk. During catalysis, ATP synthesis in the catalytic domain of F(1) is coupled via a rotary mechanism of the central stalk subunits to proton translocation. Part of the complex F(0) domain. Minor subunit located with subunit a/ATP6 in the membrane. This is ATP synthase subunit J, mitochondrial from Yarrowia lipolytica (strain CLIB 122 / E 150) (Yeast).